The chain runs to 550 residues: Transcriptional repressor RHIT (550 aa).

3 disordered regions span residues 1 to 67 (MSAD…ETRA), 174 to 200 (VQGK…VVEV), and 216 to 296 (KSFK…EGLA). Composition is skewed to basic and acidic residues over residues 11-22 (AQDKERARETPG), 45-58 (ESPH…EPHP), and 187-200 (LGHE…VVEV). The KRAB domain occupies 124-193 (VTFEDMALYL…SRQLGHEEEE (70 aa)). K216 is covalently cross-linked (Glycyl lysine isopeptide (Lys-Gly) (interchain with G-Cter in SUMO2)). The span at 267–281 (DLPKTQEGHFPEQPR) shows a compositional bias: basic and acidic residues. At S290 the chain carries Phosphoserine. C2H2-type zinc fingers lie at residues 306-328 (YKCE…RRTH), 334-356 (YACT…QIIH), 362-384 (YTCP…QRIH), 390-412 (YVCD…QGTH), 418-440 (HKCP…QRTH), 446-468 (YPCP…NRTH), 474-496 (YHCL…QRTH), and 502-524 (YSCP…EKIH).

The protein belongs to the krueppel C2H2-type zinc-finger protein family.

It localises to the nucleus. Its function is as follows. Transcriptional repressor involved in regulating MPV17L expression. By regulating MPV17L expression, contributes to the regulation of genes involved in H(2)O(2) metabolism and the mitochondrial apoptotic cascade. In Bos taurus (Bovine), this protein is Transcriptional repressor RHIT (ZNF205).